We begin with the raw amino-acid sequence, 203 residues long: uncharacterized protein (203 aa).

Residues His34, Glu97, and His172 each coordinate Fe cation.

Belongs to the hemerythrin family.

The protein localises to the mitochondrion. This is an uncharacterized protein from Schizosaccharomyces pombe (strain 972 / ATCC 24843) (Fission yeast).